The sequence spans 537 residues: Zinc metalloproteinase nas-23 (537 aa).

The first 16 residues, 1 to 16, serve as a signal peptide directing secretion; sequence MRFLILVLAGSIGIYG. Residues 17 to 111 constitute a propeptide that is removed on maturation; that stretch reads VNLPKIPKLS…EQLDHSRTKR (95 aa). Residue N77 is glycosylated (N-linked (GlcNAc...) asparagine). In terms of domain architecture, Peptidase M12A spans 116 to 311; it reads NAMYPKTIWL…AKINRHYNCE (196 aa). 6 disulfides stabilise this stretch: C156-C310, C178-C199, C314-C334, C336-C345, C356-C385, and C412-C433. Zn(2+) is bound at residue H207. E208 is an active-site residue. Residues H211 and H217 each contribute to the Zn(2+) site. The EGF-like domain occupies 306 to 346; it reads RHYNCEKNCKNKITCLNGGYQHPKNCKICVCPPGYGGSDCK. Positions 356 to 471 constitute a CUB domain; sequence CTGVLVAGET…VQLRYSTVDG (116 aa). A glycan (N-linked (GlcNAc...) asparagine) is linked at N481.

It depends on Zn(2+) as a cofactor. Expressed in the hypodermis, rectum and to a lesser extent in pharyngeal muscles and intestine.

It is found in the secreted. In terms of biological role, metalloprotease. The protein is Zinc metalloproteinase nas-23 (nas-23) of Caenorhabditis elegans.